The following is a 640-amino-acid chain: Guanylate-binding protein 4 (640 aa).

Residues 1–325 are GTPase domain (Globular); the sequence is MGERTLHAAV…DAINSGAVPC (325 aa). The region spanning 50-292 is the GB1/RHD3-type G domain; that stretch reads SQPVVVVAIV…FCSYIFTHAK (243 aa). GTP is bound by residues 60–67, 82–84, and 112–116; these read GLYRTGKS, LGS, and DTEGL. The stretch at 499 to 612 forms a coiled coil; it reads GEKAIAAERA…EQLRLLKILD (114 aa).

This sequence belongs to the TRAFAC class dynamin-like GTPase superfamily. GB1/RHD3 GTPase family. GB1 subfamily. As to quaternary structure, heterodimer with other family members, including GBP1, GBP2 and GBP5. Dimerization regulates subcellular location. Interacts with IRF7; preventing interaction between TRAF6 and IRF7, resulting in impaired TRAF6-mediated IRF7 ubiquitination. (Microbial infection) Ubiquitinated by S.flexneri IpaH9.8, leading to its degradation by the proteasome, thereby preventing its ability to promote host defense against bacterial infection.

The protein resides in the golgi apparatus membrane. It is found in the cytoplasm. Its subcellular location is the nucleus. The protein localises to the perinuclear region. It carries out the reaction GTP + H2O = GDP + phosphate + H(+). Functionally, interferon (IFN)-inducible GTPase that plays important roles in innate immunity against a diverse range of bacterial, viral and protozoan pathogens. Negatively regulates the antiviral response by inhibiting activation of IRF7 transcription factor. This chain is Guanylate-binding protein 4, found in Homo sapiens (Human).